The sequence spans 331 residues: Protein RecA (331 aa).

An ATP-binding site is contributed by 66-73; it reads GPESSGKT.

It belongs to the RecA family.

The protein resides in the cytoplasm. Can catalyze the hydrolysis of ATP in the presence of single-stranded DNA, the ATP-dependent uptake of single-stranded DNA by duplex DNA, and the ATP-dependent hybridization of homologous single-stranded DNAs. It interacts with LexA causing its activation and leading to its autocatalytic cleavage. The chain is Protein RecA from Lactobacillus delbrueckii subsp. bulgaricus (strain ATCC 11842 / DSM 20081 / BCRC 10696 / JCM 1002 / NBRC 13953 / NCIMB 11778 / NCTC 12712 / WDCM 00102 / Lb 14).